We begin with the raw amino-acid sequence, 775 residues long: MNEKKKDSLSVLDSNEFFGETTMVSPSIDVSSSPRPNVERFSPCSTKKDLLEGNNIMTRIPEELSRVSLQFDSKGSQQSMIFTNNRCLSDKENLENLQNLLYLHCDLNRPHLSCELPSEHREKCLKRRNSSLSSNLHANKRFLFNSQSDGNKKNETFPSTNYSNVFYPNNCDSKEVASETTFSLDAPNNSVNYSYFSPNLLGNDSKTRQSFPPHSSSSSHNSLHEPVIYDFSSENPSIHPSNHLSSQKNAVLKLAQLISSFEKLPESVRQYLLFHLLSRCGKHAVQNIHKILLPIFQKNFLTGFPAEITNLVLTHLDAPSLCAVSQVSHHWYKLVSSNEELWKSLFLKDGFFWDSIDSKIRTMCLEQSLSACAIMKRVYFRHFNLRERWLHAPEKIKRCSFPIHGVRLITKLQFDDDKIIVSTCSPRINIYDTKTGVLIRSLEEHEGDVWTFEYVGDTLVTGSTDRTVRVWDLRTGECKQVFYGHTSTIRCIKIVQGNQSTTDTDDVEKENRPASNDANSMPPYIISSSRDCTIRLWSLPCLDDPPFVNVNENPDQNNDFTSATTNPFYIRTLRGHTDSVREVACLGDLIVSASYDGTLRVWKASTGVCLHVLRGHVGRVYSVTINPSRQQCISAGTDAKIRIWNLESGELLQTLHGHSNLVSQVTFNQNILVSASAPPDTSLRVWDLNTGSCRDILKCPLGHIFFQHDESKVVSGSHSTLQLWDIRSGKLVRDLLTDLDIIWQVAYNENVCVAAVLRNNRFWIEVLEFGSTKSS.

Positions 298–345 (KNFLTGFPAEITNLVLTHLDAPSLCAVSQVSHHWYKLVSSNEELWKSL) constitute an F-box domain. WD repeat units lie at residues 444–472 (EHEGDVWTFEYVGDTLVTGSTDRTVRVWD), 484–538 (GHTS…RLWS), 575–603 (GHTDSVREVACLGDLIVSASYDGTLRVWK), 615–645 (GHVGRVYSVTINPSRQQCISAGTDAKIRIWN), and 657–687 (GHSNLVSQVTFNQNILVSASAPPDTSLRVWD).

Homodimer and heterodimer with pop2. Binds to cdc18, phosphorylated cig2, cul1, pip1 and skp1.

It is found in the nucleus. In terms of biological role, involved in maintenance of ploidy through proteasome dependent degradation of CDK inhibitor rum1 and S-phase initiator cdc18. Functions as a recognition factor for rum1 and cdc18, which are subsequently ubiquitinated and targeted to the 26S proteasome for degradation. Together with pop2, required for cig2 instability during G2 and M phase and cig2 degradation in exponentially growing cells. Regulates cell-cycle progression under starvation through the rum1 protein. The sequence is that of WD repeat-containing protein pop1 (pop1) from Schizosaccharomyces pombe (strain 972 / ATCC 24843) (Fission yeast).